Consider the following 239-residue polypeptide: Probable transcriptional regulatory protein Veis_4238 (239 aa).

Residues M1–G22 form a disordered region.

Belongs to the TACO1 family.

Its subcellular location is the cytoplasm. This is Probable transcriptional regulatory protein Veis_4238 from Verminephrobacter eiseniae (strain EF01-2).